A 165-amino-acid chain; its full sequence is Putative tyrosine-protein phosphatase AMV078 (165 aa).

The Tyrosine-protein phosphatase domain maps to 2 to 149 (NISNINNDIY…LKFYNSYKNI (148 aa)). The active-site Phosphocysteine intermediate is cysteine 94.

It belongs to the protein-tyrosine phosphatase family. Non-receptor class dual specificity subfamily.

It catalyses the reaction O-phospho-L-tyrosyl-[protein] + H2O = L-tyrosyl-[protein] + phosphate. This is Putative tyrosine-protein phosphatase AMV078 from Amsacta moorei entomopoxvirus (AmEPV).